A 285-amino-acid chain; its full sequence is (3S)-malyl-CoA thioesterase (285 aa).

Substrate contacts are provided by Arg70 and Glu122. 2 residues coordinate Mg(2+): Glu122 and Asp148.

It belongs to the HpcH/HpaI aldolase family. In terms of assembly, homodimer or homotrimer. Mg(2+) is required as a cofactor.

It carries out the reaction (S)-malyl-CoA + H2O = (S)-malate + CoA + H(+). In terms of biological role, catalyzes the hydrolysis of (3S)-malyl-CoA to (3S)-malate and free CoA. Inactive towards beta-methylmalyl-CoA and other CoA esters. This chain is (3S)-malyl-CoA thioesterase, found in Cereibacter sphaeroides (strain ATCC 17025 / ATH 2.4.3) (Rhodobacter sphaeroides).